The primary structure comprises 515 residues: 1-pyrroline-5-carboxylate dehydrogenase 2 (515 aa).

Residues Glu286 and Cys320 contribute to the active site.

Belongs to the aldehyde dehydrogenase family. RocA subfamily.

The catalysed reaction is L-glutamate 5-semialdehyde + NAD(+) + H2O = L-glutamate + NADH + 2 H(+). It functions in the pathway amino-acid degradation; L-proline degradation into L-glutamate; L-glutamate from L-proline: step 2/2. This chain is 1-pyrroline-5-carboxylate dehydrogenase 2 (rocA2), found in Halalkalibacterium halodurans (strain ATCC BAA-125 / DSM 18197 / FERM 7344 / JCM 9153 / C-125) (Bacillus halodurans).